A 298-amino-acid polypeptide reads, in one-letter code: Probable 2-(5''-triphosphoribosyl)-3'-dephosphocoenzyme-A synthase (298 aa).

It belongs to the CitG/MdcB family.

The catalysed reaction is 3'-dephospho-CoA + ATP = 2'-(5''-triphospho-alpha-D-ribosyl)-3'-dephospho-CoA + adenine. In Salmonella arizonae (strain ATCC BAA-731 / CDC346-86 / RSK2980), this protein is Probable 2-(5''-triphosphoribosyl)-3'-dephosphocoenzyme-A synthase.